The primary structure comprises 264 residues: 3-methyl-2-oxobutanoate hydroxymethyltransferase (264 aa).

Residues aspartate 45 and aspartate 84 each coordinate Mg(2+). Residues 45–46 (DS), aspartate 84, and lysine 112 each bind 3-methyl-2-oxobutanoate. Glutamate 114 contacts Mg(2+). Glutamate 181 acts as the Proton acceptor in catalysis.

The protein belongs to the PanB family. As to quaternary structure, homodecamer; pentamer of dimers. The cofactor is Mg(2+).

The protein resides in the cytoplasm. The enzyme catalyses 3-methyl-2-oxobutanoate + (6R)-5,10-methylene-5,6,7,8-tetrahydrofolate + H2O = 2-dehydropantoate + (6S)-5,6,7,8-tetrahydrofolate. It participates in cofactor biosynthesis; (R)-pantothenate biosynthesis; (R)-pantoate from 3-methyl-2-oxobutanoate: step 1/2. In terms of biological role, catalyzes the reversible reaction in which hydroxymethyl group from 5,10-methylenetetrahydrofolate is transferred onto alpha-ketoisovalerate to form ketopantoate. The sequence is that of 3-methyl-2-oxobutanoate hydroxymethyltransferase from Shewanella sp. (strain ANA-3).